A 496-amino-acid chain; its full sequence is Glutamyl-tRNA(Gln) amidotransferase subunit A (496 aa).

Active-site charge relay system residues include Lys75 and Ser150. Ser174 acts as the Acyl-ester intermediate in catalysis.

Belongs to the amidase family. GatA subfamily. In terms of assembly, heterotrimer of A, B and C subunits.

It carries out the reaction L-glutamyl-tRNA(Gln) + L-glutamine + ATP + H2O = L-glutaminyl-tRNA(Gln) + L-glutamate + ADP + phosphate + H(+). Its function is as follows. Allows the formation of correctly charged Gln-tRNA(Gln) through the transamidation of misacylated Glu-tRNA(Gln) in organisms which lack glutaminyl-tRNA synthetase. The reaction takes place in the presence of glutamine and ATP through an activated gamma-phospho-Glu-tRNA(Gln). The sequence is that of Glutamyl-tRNA(Gln) amidotransferase subunit A from Burkholderia lata (strain ATCC 17760 / DSM 23089 / LMG 22485 / NCIMB 9086 / R18194 / 383).